Reading from the N-terminus, the 316-residue chain is Apolipoprotein E (316 aa).

The N-terminal stretch at Met-1–Ala-18 is a signal peptide. Thr-32 carries an O-linked (GalNAc...) threonine glycan. 8 consecutive repeat copies span residues Ala-79–Gly-100, Pro-101–Gly-122, Ser-123–Gly-144, Gln-145–Leu-166, Arg-167–Glu-188, Arg-189–Ala-210, Thr-211–His-232, and Gly-233–Glu-254. An 8 X 22 AA approximate tandem repeats region spans residues Ala-79–Glu-254. Met-142 carries the post-translational modification Methionine sulfoxide. A Phosphoserine modification is found at Ser-146. The tract at residues His-157–Arg-167 is LDL and other lipoprotein receptors binding. Leu-161–Arg-164 is a heparin binding site. The lipid-binding and lipoprotein association stretch occupies residues Ala-209–Met-289. O-linked (GalNAc...) threonine glycosylation is present at Thr-211. Arg-228 to Leu-235 provides a ligand contact to heparin. The interval Asn-265–His-316 is homooligomerization. Residues Arg-277–Met-289 are specificity for association with VLDL. O-linked (GalNAc...) threonine glycosylation is present at Thr-309. Ser-310 carries O-linked (GalNAc...) serine glycosylation.

Belongs to the apolipoprotein A1/A4/E family. As to quaternary structure, homotetramer. May interact with ABCA1; functionally associated with ABCA1 in the biogenesis of HDLs. May interact with APP/A4 amyloid-beta peptide; the interaction is extremely stable in vitro but its physiological significance is unclear. May interact with MAPT. May interact with MAP2. In the cerebrospinal fluid, interacts with secreted SORL1. Interacts with PMEL; this allows the loading of PMEL luminal fragment on ILVs to induce fibril nucleation. In terms of processing, APOE exists as multiple glycosylated and sialylated glycoforms within cells and in plasma. The extent of glycosylation and sialylation are tissue and context specific. Post-translationally, glycated in plasma VLDL. Phosphorylated by FAM20C in the extracellular medium.

The protein localises to the secreted. The protein resides in the extracellular space. It is found in the extracellular matrix. Its subcellular location is the extracellular vesicle. It localises to the endosome. The protein localises to the multivesicular body. Its function is as follows. APOE is an apolipoprotein, a protein associating with lipid particles, that mainly functions in lipoprotein-mediated lipid transport between organs via the plasma and interstitial fluids. APOE is a core component of plasma lipoproteins and is involved in their production, conversion and clearance. Apolipoproteins are amphipathic molecules that interact both with lipids of the lipoprotein particle core and the aqueous environment of the plasma. As such, APOE associates with chylomicrons, chylomicron remnants, very low density lipoproteins (VLDL) and intermediate density lipoproteins (IDL) but shows a preferential binding to high-density lipoproteins (HDL). It also binds a wide range of cellular receptors including the LDL receptor/LDLR and the very low-density lipoprotein receptor/VLDLR that mediate the cellular uptake of the APOE-containing lipoprotein particles. Finally, APOE also has a heparin-binding activity and binds heparan-sulfate proteoglycans on the surface of cells, a property that supports the capture and the receptor-mediated uptake of APOE-containing lipoproteins by cells. This chain is Apolipoprotein E (APOE), found in Bos taurus (Bovine).